We begin with the raw amino-acid sequence, 448 residues long: Argininosuccinate synthase (448 aa).

ATP-binding positions include 17 to 25 (AFSGGLDTS) and A43. Y99 serves as a coordination point for L-citrulline. Residues G129 and T131 each contribute to the ATP site. L-aspartate is bound by residues T131, N135, and D136. Residue N135 participates in L-citrulline binding. D136 contributes to the ATP binding site. L-citrulline is bound by residues R139 and S192. Position 194 (D194) interacts with ATP. L-citrulline-binding residues include T201, E203, and E280.

This sequence belongs to the argininosuccinate synthase family. Type 2 subfamily. In terms of assembly, homotetramer.

Its subcellular location is the cytoplasm. The catalysed reaction is L-citrulline + L-aspartate + ATP = 2-(N(omega)-L-arginino)succinate + AMP + diphosphate + H(+). Its pathway is amino-acid biosynthesis; L-arginine biosynthesis; L-arginine from L-ornithine and carbamoyl phosphate: step 2/3. The polypeptide is Argininosuccinate synthase (Enterobacter sp. (strain 638)).